Here is an 812-residue protein sequence, read N- to C-terminus: MRLAAESSLVFFVSHFYFERFFSFVMVAYTLDTLFASDIDSATLFYSEGCGPIRLVALSAQMRRLVRLGPIRVAKACVEVRPMAPTKEFFEEGRQLQHIEAAGVGDFPDSERSGDTFVNPFTGRLTPTWGRVAKELFSLGFEHSIVNPFRLVWNPTKAALVSDAALQPFRTSTVTWRRNLAALLSRRDAADAVGEEIHRLYNEITSAYLPPKLDTMHDPRLSTMTMTPDQQNVIRCALRGYSMFIGGSAGTGKTVLLKAIHRKLTEMGLRVAMTATTGVASVQLGGCTFHLAFGVPIKGEEGTRKRWDSNAFRAVDVVIIDEVSLLDAELFETFEEEARMARLQQSPFGGLQVIACGDFLQLAMMDVSIGGPCYQSHAFRHLIPVCLVTSMRQAQGDPFCELLGQLRVGKFDKKAFKALDRPVSGDANNVTYIFPRRCDAQRLNDEKLCELRSEEMIFAPQRGPLQLVGNFTPAGLVDWGRKKDFPKREKIITVLSEEIKRITGVDIVDHNIVVMPAGGEKNAVLIRLRHSEDRNVLICKNGGSKEHGASNEGGAEESHWRAILEATAGRLKGKLHQIYNQDPHNFIPPSVSLMLADASLHPNAELISPLRLKLGCRVMINRNLSRTVSNGSVGIVEAFAAPNLDLFPRRHETSPKAFHTWSLERNGFQRLPIVRLLSGEVVQLPPLSVMIGGTPSTYFYGHELFVLPLQLGYGFTVHKVQGLTLEGTVVLDCKKFFECPHLVYVACSRVRSMDQLIVRNVRSDMIIVRQSALDFTNALRDASVMSSLDPPDGCTRASWVRRLSPLLVGLTD.

Glycine 247–threonine 254 contributes to the ATP binding site. A DNA-binding region spans residues histidine 741 to valine 761.

The protein belongs to the helicase family. PIF1 subfamily. In terms of assembly, monomer. It depends on Mg(2+) as a cofactor.

The protein localises to the cytoplasm. It carries out the reaction Couples ATP hydrolysis with the unwinding of duplex DNA at the replication fork by translocating in the 5'-3' direction. This creates two antiparallel DNA single strands (ssDNA). The leading ssDNA polymer is the template for DNA polymerase III holoenzyme which synthesizes a continuous strand.. It catalyses the reaction ATP + H2O = ADP + phosphate + H(+). Functionally, DNA-dependent ATPase and 5'-3' DNA helicase required for the maintenance of genome stability. In Trypanosoma brucei brucei (strain 927/4 GUTat10.1), this protein is ATP-dependent DNA helicase PIF3.